A 380-amino-acid chain; its full sequence is Cytochrome b (380 aa).

4 helical membrane passes run phenylalanine 34–methionine 54, tryptophan 78–isoleucine 99, tryptophan 114–leucine 134, and phenylalanine 179–threonine 199. Heme b is bound by residues histidine 84 and histidine 98. 2 residues coordinate heme b: histidine 183 and histidine 197. Residue histidine 202 coordinates a ubiquinone. The next 4 membrane-spanning stretches (helical) occupy residues leucine 227–serine 247, leucine 289–histidine 309, leucine 321–serine 341, and phenylalanine 348–proline 368.

It belongs to the cytochrome b family. The cytochrome bc1 complex contains 11 subunits: 3 respiratory subunits (MT-CYB, CYC1 and UQCRFS1), 2 core proteins (UQCRC1 and UQCRC2) and 6 low-molecular weight proteins (UQCRH/QCR6, UQCRB/QCR7, UQCRQ/QCR8, UQCR10/QCR9, UQCR11/QCR10 and a cleavage product of UQCRFS1). This cytochrome bc1 complex then forms a dimer. Heme b serves as cofactor.

Its subcellular location is the mitochondrion inner membrane. Component of the ubiquinol-cytochrome c reductase complex (complex III or cytochrome b-c1 complex) that is part of the mitochondrial respiratory chain. The b-c1 complex mediates electron transfer from ubiquinol to cytochrome c. Contributes to the generation of a proton gradient across the mitochondrial membrane that is then used for ATP synthesis. The polypeptide is Cytochrome b (MT-CYB) (Oceanodroma melania (Black storm-petrel)).